The chain runs to 162 residues: Phospholipase A and acyltransferase 3 (162 aa).

Topologically, residues 1-133 (MLAPIPEPKP…VPRSDQVRDA (133 aa)) are cytoplasmic. An LRAT domain is found at 13-129 (LIEIFRPMYR…LRYGVPRSDQ (117 aa)). Residues H23 and H35 contribute to the active site. C113 serves as the catalytic Acyl-thioester intermediate. The helical transmembrane segment at 134-154 (VKAVGIAGVGLAALGLVGVML) threads the bilayer. At 155 to 162 (SRNKKQKQ) the chain is on the lumenal side.

It belongs to the H-rev107 family. As to quaternary structure, interacts with PPP2R1A; this interaction might decrease PP2A activity. As to expression, ubiquitously expressed in normal tissues but down-regulated in primary carcinomas or in many cell lines derived from tumors. Highly expressed in white adipose tissue and in adipocytes. Expressed at lower levels in brown adipose tissue.

It localises to the cell membrane. The protein localises to the cytoplasm. It is found in the cytosol. Its subcellular location is the perinuclear region. The protein resides in the peroxisome membrane. It localises to the mitochondrion membrane. The protein localises to the nucleus envelope. It is found in the lysosome membrane. Its subcellular location is the endoplasmic reticulum membrane. The catalysed reaction is a 1,2-diacyl-sn-glycero-3-phosphocholine + H2O = a 1-acyl-sn-glycero-3-phosphocholine + a fatty acid + H(+). The enzyme catalyses a 1,2-diacyl-sn-glycero-3-phosphocholine + H2O = a 2-acyl-sn-glycero-3-phosphocholine + a fatty acid + H(+). It carries out the reaction 1,2-dihexadecanoyl-sn-glycero-3-phosphocholine + H2O = 1-hexadecanoyl-sn-glycero-3-phosphocholine + hexadecanoate + H(+). It catalyses the reaction 1,2-dihexadecanoyl-sn-glycero-3-phosphocholine + H2O = 2-hexadecanoyl-sn-glycero-3-phosphocholine + hexadecanoate + H(+). The catalysed reaction is 1-hexadecanoyl-2-(9Z-octadecenoyl)-sn-glycero-3-phosphocholine + H2O = 2-(9Z-octadecenoyl)-sn-glycero-3-phosphocholine + hexadecanoate + H(+). The enzyme catalyses 1-hexadecanoyl-2-(9Z-octadecenoyl)-sn-glycero-3-phosphocholine + H2O = 1-hexadecanoyl-sn-glycero-3-phosphocholine + (9Z)-octadecenoate + H(+). It carries out the reaction 1-hexadecanoyl-2-(5Z,8Z,11Z,14Z-eicosatetraenoyl)-sn-glycero-3-phosphocholine + H2O = 1-hexadecanoyl-sn-glycero-3-phosphocholine + (5Z,8Z,11Z,14Z)-eicosatetraenoate + H(+). It catalyses the reaction 1-hexadecanoyl-2-(5Z,8Z,11Z,14Z-eicosatetraenoyl)-sn-glycero-3-phosphocholine + H2O = 2-(5Z,8Z,11Z,14Z)-eicosatetraenoyl-sn-glycero-3-phosphocholine + hexadecanoate + H(+). The catalysed reaction is 1-hexadecanoyl-2-(9Z,12Z-octadecadienoyl)-sn-glycero-3-phosphoethanolamine + H2O = 1-hexadecanoyl-sn-glycero-3-phosphoethanolamine + (9Z,12Z)-octadecadienoate + H(+). The enzyme catalyses 1-hexadecanoyl-2-(9Z,12Z-octadecadienoyl)-sn-glycero-3-phosphoethanolamine + H2O = 2-(9Z,12Z)-octadecadienoyl-sn-glycero-3-phosphoethanolamine + hexadecanoate + H(+). It carries out the reaction 1-hexadecanoyl-2-(5Z,8Z,11Z,14Z-eicosatetraenoyl)-sn-glycero-3-phosphoethanolamine + H2O = 1-hexadecanoyl-sn-glycero-3-phosphoethanolamine + (5Z,8Z,11Z,14Z)-eicosatetraenoate + H(+). It catalyses the reaction 1-hexadecanoyl-2-(5Z,8Z,11Z,14Z-eicosatetraenoyl)-sn-glycero-3-phosphoethanolamine + H2O = 2-(5Z,8Z,11Z,14Z)-eicosatetraenoyl-sn-glycero-3-phosphoethanolamine + hexadecanoate + H(+). The catalysed reaction is 1-hexanoyl-2-acyl-sn-glycero-3-phosphocholine + H2O = hexanoate + a 2-acyl-sn-glycero-3-phosphocholine + H(+). The enzyme catalyses 1-hexanoyl-2-acyl-sn-glycero-3-phosphocholine + H2O = 1-hexanoyl-sn-glycero-3-phosphocholine + a fatty acid + H(+). It carries out the reaction 1,2-diheptadecanoyl-sn-glycero-3-phosphoethanolamine + 1-(9Z-octadecenoyl)-2-hexadecanoyl-sn-glycero-3-phosphocholine = 1,2-diheptadecanoyl-sn-glycero-3-phospho-N-hexadecanoyl-ethanolamine + 1-(9Z-octadecenoyl)-sn-glycero-3-phosphocholine + H(+). It catalyses the reaction 1,2-diheptadecanoyl-sn-glycero-3-phosphoethanolamine + 1-(9Z-octadecenoyl)-2-hexadecanoyl-sn-glycero-3-phosphocholine = 1,2-diheptadecanoyl-sn-glycero-3-phospho-N-(9Z-octadecenoyl)-ethanolamine + 2-hexadecanoyl-sn-glycero-3-phosphocholine + H(+). The catalysed reaction is 1,2-dihexanoyl-sn-glycero-3-phosphoethanolamine + 2-heptanoyl-sn-glycero-3-phosphocholine = hexanoyl-sn-glycero-3-phosphoethanolamine + 1-hexanoyl-2-heptanoyl-sn-glycero-3-phosphocholine. The enzyme catalyses 1-hexadecanoyl-2-octadecanoyl-sn-glycero-3-phosphocholine + H2O = octadecanoate + 1-hexadecanoyl-sn-glycero-3-phosphocholine + H(+). It carries out the reaction 1-hexadecanoyl-2-octadecanoyl-sn-glycero-3-phosphocholine + H2O = 2-octadecanoyl-sn-glycero-3-phosphocholine + hexadecanoate + H(+). It catalyses the reaction 1-octadecanoyl-2-hexadecanoyl-sn-glycero-3-phosphocholine + H2O = 1-octadecanoyl-sn-glycero-3-phosphocholine + hexadecanoate + H(+). The catalysed reaction is 1-octadecanoyl-2-hexadecanoyl-sn-glycero-3-phosphocholine + H2O = 2-hexadecanoyl-sn-glycero-3-phosphocholine + octadecanoate + H(+). The enzyme catalyses 1-hexadecanoyl-2-(9Z,12Z-octadecadienoyl)-sn-glycero-3-phosphocholine + H2O = (9Z,12Z)-octadecadienoate + 1-hexadecanoyl-sn-glycero-3-phosphocholine + H(+). It carries out the reaction 1-hexadecanoyl-2-(9Z,12Z-octadecadienoyl)-sn-glycero-3-phosphocholine + H2O = 2-(9Z,12Z-octadecadienoyl)-sn-glycero-3-phosphocholine + hexadecanoate + H(+). It catalyses the reaction 1,2-di-(9Z-octadecenoyl)-sn-glycero-3-phosphocholine + H2O = 2-(9Z-octadecenoyl)-sn-glycero-3-phosphocholine + (9Z)-octadecenoate + H(+). The catalysed reaction is 1,2-dihexadecanoyl-sn-glycero-3-phosphocholine + H2O = hexadecanoyl-sn-glycero-3-phosphocholine + hexadecanoate + H(+). The enzyme catalyses 1,2-di-(9Z-octadecenoyl)-sn-glycero-3-phosphocholine + H2O = 1-(9Z-octadecenoyl)-sn-glycero-3-phosphocholine + (9Z)-octadecenoate + H(+). It carries out the reaction 1,2-di-(9Z-octadecenoyl)-sn-glycero-3-phosphoethanolamine + 1,2-dihexadecanoyl-sn-glycero-3-phosphocholine = hexadecanoyl-sn-glycero-3-phosphocholine + N-hexadecanoyl-1,2-di-(9Z-octadecenoyl)-sn-glycero-3-phosphoethanolamine + H(+). It catalyses the reaction 1,2-di-(9Z,12Z-octadecadienoyl)-sn-glycero-3-phosphocholine + H2O = 1-(9Z,12Z)-octadecadienoyl-sn-glycero-3-phosphocholine + (9Z,12Z)-octadecadienoate + H(+). Functionally, exhibits both phospholipase A1/2 and acyltransferase activities. Shows phospholipase A1 (PLA1) and A2 (PLA2), catalyzing the calcium-independent release of fatty acids from the sn-1 or sn-2 position of glycerophospholipids. For most substrates, PLA1 activity is much higher than PLA2 activity. Shows O-acyltransferase activity, catalyzing the transfer of a fatty acyl group from glycerophospholipid to the hydroxyl group of lysophospholipid. Shows N-acyltransferase activity,catalyzing the calcium-independent transfer of a fatty acyl group at the sn-1 position of phosphatidylcholine (PC) and other glycerophospholipids to the primary amine of phosphatidylethanolamine (PE), forming N-acylphosphatidylethanolamine (NAPE), which serves as precursor for N-acylethanolamines (NAEs). Exhibits high N-acyltransferase activity and low phospholipase A1/2 activity. Required for complete organelle rupture and degradation that occur during eye lens terminal differentiation, when fiber cells that compose the lens degrade all membrane-bound organelles in order to provide lens with transparency to allow the passage of light. Organelle membrane degradation is probably catalyzed by the phospholipase activity. Its function is as follows. (Microbial infection) Acts as a host factor for picornaviruses: required during early infection to promote viral genome release into the cytoplasm. This Mus musculus (Mouse) protein is Phospholipase A and acyltransferase 3.